A 233-amino-acid chain; its full sequence is Zinc import ATP-binding protein ZnuC (233 aa).

An ABC transporter domain is found at 6 to 222 (IEFRNVSKKF…SEFSNALSSL (217 aa)). 38 to 45 (GPNGAGKT) is an ATP binding site.

Belongs to the ABC transporter superfamily. Zinc importer (TC 3.A.1.15.5) family. As to quaternary structure, the complex is composed of two ATP-binding proteins (ZnuC), two transmembrane proteins (ZnuB) and a solute-binding protein (ZnuA).

It is found in the cell inner membrane. The enzyme catalyses Zn(2+)(out) + ATP(in) + H2O(in) = Zn(2+)(in) + ADP(in) + phosphate(in) + H(+)(in). In terms of biological role, part of the ABC transporter complex ZnuABC involved in zinc import. Responsible for energy coupling to the transport system. The protein is Zinc import ATP-binding protein ZnuC of Rickettsia prowazekii (strain Madrid E).